Here is a 544-residue protein sequence, read N- to C-terminus: Pentatricopeptide repeat-containing protein At1g66345, mitochondrial (544 aa).

The N-terminal 116 residues, 1-116, are a transit peptide targeting the mitochondrion; sequence MASALRRLVE…RNLRHGIKSY (116 aa). PPR repeat units lie at residues 163 to 197, 198 to 232, 233 to 267, 268 to 302, 303 to 337, 338 to 372, 373 to 407, 408 to 442, 443 to 477, 478 to 512, and 513 to 544; these read TPLV…GFTL, SVIT…RIYP, NEIT…RCLP, SVIV…NMVV, DTIG…GFSA, NSFV…GVSP, YDET…GLMP, SCSA…GFVP, DEHT…KMSP, GFEV…LIEP, and NADI…ISVR.

Belongs to the PPR family. P subfamily.

It is found in the mitochondrion. The sequence is that of Pentatricopeptide repeat-containing protein At1g66345, mitochondrial from Arabidopsis thaliana (Mouse-ear cress).